Here is a 405-residue protein sequence, read N- to C-terminus: L-rhamnonate dehydratase (405 aa).

Substrate-binding residues include histidine 33 and arginine 59. Mg(2+) contacts are provided by aspartate 226, glutamate 252, and glutamate 280. The active-site Proton acceptor is histidine 329. Substrate is bound at residue glutamate 349.

The protein belongs to the mandelate racemase/muconate lactonizing enzyme family. RhamD subfamily. As to quaternary structure, homooctamer; tetramer of dimers. The cofactor is Mg(2+).

It catalyses the reaction L-rhamnonate = 2-dehydro-3-deoxy-L-rhamnonate + H2O. Catalyzes the dehydration of L-rhamnonate to 2-keto-3-deoxy-L-rhamnonate (KDR). This chain is L-rhamnonate dehydratase, found in Escherichia coli O127:H6 (strain E2348/69 / EPEC).